The following is a 399-amino-acid chain: Subtilisin-like protease 4 (399 aa).

The N-terminal stretch at 1–19 (MVCLKTLSVFLAAFAAADA) is a signal peptide. Positions 20–118 (RAVFKTQGHK…VEQDQVVRIS (99 aa)) are excised as a propeptide. Residues 38–117 (YIVVMKDGVS…YVEQDQVVRI (80 aa)) enclose the Inhibitor I9 domain. The N-linked (GlcNAc...) asparagine glycan is linked to asparagine 102. A Peptidase S8 domain is found at 128–399 (SWGLGRVSHR…NRLLYNGSGQ (272 aa)). Residues aspartate 160 and histidine 191 each act as charge relay system in the active site. 2 N-linked (GlcNAc...) asparagine glycosylation sites follow: asparagine 252 and asparagine 308. Catalysis depends on serine 346, which acts as the Charge relay system. Asparagine 395 carries N-linked (GlcNAc...) asparagine glycosylation.

Belongs to the peptidase S8 family.

The protein localises to the secreted. Functionally, secreted subtilisin-like serine protease with keratinolytic activity that contributes to pathogenicity. In Trichophyton rubrum (Athlete's foot fungus), this protein is Subtilisin-like protease 4 (SUB4).